We begin with the raw amino-acid sequence, 485 residues long: UDP-N-acetylmuramate--L-alanine ligase (485 aa).

120–126 lines the ATP pocket; it reads GSHGKTT.

The protein belongs to the MurCDEF family.

It localises to the cytoplasm. It catalyses the reaction UDP-N-acetyl-alpha-D-muramate + L-alanine + ATP = UDP-N-acetyl-alpha-D-muramoyl-L-alanine + ADP + phosphate + H(+). It functions in the pathway cell wall biogenesis; peptidoglycan biosynthesis. Cell wall formation. The chain is UDP-N-acetylmuramate--L-alanine ligase from Rickettsia peacockii (strain Rustic).